The sequence spans 538 residues: Syncytin-1 (538 aa).

The N-terminal stretch at 1 to 20 is a signal peptide; it reads MALPYHIFLFTVLLPSFTLT. The Extracellular portion of the chain corresponds to 31–443; sequence SSPYQEFLWR…NIGPWGLLSQ (413 aa). N-linked (GlcNAc...) asparagine glycosylation occurs at asparagine 169. Positions 186 to 189 match the CXXC motif; the sequence is CWMC. Cystine bridges form between cysteine 186–cysteine 189, cysteine 186–cysteine 405, and cysteine 397–cysteine 404. N-linked (GlcNAc...) asparagine glycosylation is found at asparagine 208, asparagine 214, asparagine 234, asparagine 242, and asparagine 281. Residues 320–340 form a fusion peptide region; it reads ILPFVMGAGVLGALGTGIGSI. The immunosuppression stretch occupies residues 380–396; the sequence is LQNRRALDLLTAERGGT. The CX6CC motif lies at 397 to 405; sequence CLFLGEECC. Residue asparagine 409 is glycosylated (N-linked (GlcNAc...) asparagine). The helical transmembrane segment at 444–464 threads the bilayer; that stretch reads WMPWILPFLGPLAAIILLLLF. The tract at residues 465–484 is essential for the fusiogenic function; sequence GPCIFNLLVNFVSSRIEAIK. Topologically, residues 465-538 are cytoplasmic; that stretch reads GPCIFNLLVN…LLRPNSAGSS (74 aa). The segment at 494–538 is disordered; the sequence is KTKNYRRSLDWPASPRSDVNDIKGIPPEEISTAQPLLRPNSAGSS.

Belongs to the gamma type-C retroviral envelope protein family. HERV class-I W env subfamily. In terms of assembly, the mature envelope protein (Env) consists of a trimer of SU-TM heterodimers attached probably by a labile interchain disulfide bond. Interacts with the C-type lectin CD209/DC-SIGN. Specific enzymatic cleavages in vivo yield mature proteins. Envelope glycoproteins are synthesized as an inactive precursor that is heavily N-glycosylated and processed likely by furin in the Golgi to yield the mature SU and TM proteins. The cleavage site between SU and TM requires the minimal sequence [KR]-X-[KR]-R. In terms of processing, the CXXC motif is highly conserved across a broad range of retroviral envelope proteins. It is thought to participate in the formation of a labile disulfide bond possibly with the CX6CC motif present in the transmembrane protein.

It localises to the cell membrane. The protein localises to the virion. This endogenous retroviral envelope protein has retained its original fusogenic properties and participates in trophoblast fusion and the formation of a syncytium during placenta morphogenesis. May recognize and induce fusion through binding of SLC1A4 and SLC1A5. Its function is as follows. Endogenous envelope proteins may have kept, lost or modified their original function during evolution. Retroviral envelope proteins mediate receptor recognition and membrane fusion during early infection. The surface protein (SU) mediates receptor recognition, while the transmembrane protein (TM) acts as a class I viral fusion protein. The protein may have at least 3 conformational states: pre-fusion native state, pre-hairpin intermediate state, and post-fusion hairpin state. During viral and target cell membrane fusion, the coiled coil regions (heptad repeats) assume a trimer-of-hairpins structure, positioning the fusion peptide in close proximity to the C-terminal region of the ectodomain. The formation of this structure appears to drive apposition and subsequent fusion of membranes. The sequence is that of Syncytin-1 (ERVW-1) from Hylobates pileatus (Pileated gibbon).